A 166-amino-acid chain; its full sequence is MAKTLSKPASGALAPWLGISLIVILFDQLSKIAILKTFAYGAQHALTSFFNLVLVYNRGAAFGFLSTASGWQRWAFTALGVGATLVICFLLKRHGHQRLFSVSLALILGGALGNVIDRLVYGHVIDFLDFHLGAWHFPAFNLADSAITVGAVLLIYDELRRVRGAR.

4 consecutive transmembrane segments (helical) span residues 9-29, 45-65, 71-91, and 100-120; these read ASGA…FDQL, ALTS…FGFL, WQRW…CFLL, and FSVS…DRLV. Catalysis depends on residues aspartate 126 and aspartate 144. Residues 135–155 traverse the membrane as a helical segment; that stretch reads WHFPAFNLADSAITVGAVLLI.

This sequence belongs to the peptidase A8 family.

It is found in the cell inner membrane. The catalysed reaction is Release of signal peptides from bacterial membrane prolipoproteins. Hydrolyzes -Xaa-Yaa-Zaa-|-(S,diacylglyceryl)Cys-, in which Xaa is hydrophobic (preferably Leu), and Yaa (Ala or Ser) and Zaa (Gly or Ala) have small, neutral side chains.. It functions in the pathway protein modification; lipoprotein biosynthesis (signal peptide cleavage). This protein specifically catalyzes the removal of signal peptides from prolipoproteins. This Burkholderia cenocepacia (strain HI2424) protein is Lipoprotein signal peptidase.